The chain runs to 252 residues: Triosephosphate isomerase (252 aa).

Residue 10–12 (NWK) participates in substrate binding. Residue His-96 is the Electrophile of the active site. Catalysis depends on Glu-168, which acts as the Proton acceptor. Substrate-binding positions include Gly-174, Ser-214, and 235-236 (GG).

The protein belongs to the triosephosphate isomerase family. Homodimer.

It localises to the cytoplasm. The enzyme catalyses D-glyceraldehyde 3-phosphate = dihydroxyacetone phosphate. It functions in the pathway carbohydrate biosynthesis; gluconeogenesis. It participates in carbohydrate degradation; glycolysis; D-glyceraldehyde 3-phosphate from glycerone phosphate: step 1/1. Functionally, involved in the gluconeogenesis. Catalyzes stereospecifically the conversion of dihydroxyacetone phosphate (DHAP) to D-glyceraldehyde-3-phosphate (G3P). The sequence is that of Triosephosphate isomerase from Streptococcus mutans serotype c (strain ATCC 700610 / UA159).